A 25-amino-acid polypeptide reads, in one-letter code: Ocellatin-F1 (25 aa).

Leu-25 carries the leucine amide modification.

This sequence belongs to the frog skin active peptide (FSAP) family. Ocellatin subfamily. As to expression, expressed by the skin glands.

It localises to the secreted. Antibacterial peptide that inhibits reference strains of both Gram-negative bacteria (E.coli, P.aeruginosa, E.cloacae, K.pneumoniae, and A.actinomycetemcomitans) and Gram-positive bacteria (S.aureus) with relatively low potencies (MIC=25-400 uM). Shows antifungal activity against C.lusitaniae (MIC=50.25 uM), but no activity against C.albicans. In the presence of an alkaloid (bufotenine), inhibits cellular infection by the rabies virus. The peptide shows very low hemolytic activity against rabbit erythrocytes. The low amphipathicity of alpha-helices demonstrated by wheel projection as well as the low cationicity may explain the low antibacterial and hemolytic potencies. This chain is Ocellatin-F1, found in Leptodactylus labyrinthicus (Labyrinth frog).